A 257-amino-acid polypeptide reads, in one-letter code: Flagellar brake protein YcgR 1 (257 aa).

The span at 1–18 (MDTTQSNGQTDTQGQLHA) shows a compositional bias: polar residues. Residues 1–30 (MDTTQSNGQTDTQGQLHAQTAEGGNDFGRR) are disordered. In terms of domain architecture, PilZ spans 133–246 (QRREYFRVDA…AENTLQRLIT (114 aa)).

This sequence belongs to the YcgR family. Monomer. Interacts with the flagellar basal bodies.

It localises to the bacterial flagellum basal body. Acts as a flagellar brake, regulating swimming and swarming in a bis-(3'-5') cyclic diguanylic acid (c-di-GMP)-dependent manner. Binds 1 c-di-GMP dimer per subunit. Increasing levels of c-di-GMP lead to decreased motility. In Paraburkholderia phytofirmans (strain DSM 17436 / LMG 22146 / PsJN) (Burkholderia phytofirmans), this protein is Flagellar brake protein YcgR 1.